The primary structure comprises 57 residues: Stress response protein (57 aa).

The Nuclear localization signal motif lies at 6–10 (RKERR).

Mesophyll protoplasts.

It is found in the nucleus. Functionally, stress response. May play a role in the reentering of protoplasts into the cell cycle. The chain is Stress response protein from Nicotiana sylvestris (Wood tobacco).